The following is a 31-amino-acid chain: U1-theraphotoxin-Cv1a (31 aa).

Disulfide bonds link C2–C16, C9–C21, and C15–C28.

In terms of tissue distribution, expressed by the venom gland.

Its subcellular location is the secreted. Its function is as follows. Insecticidal toxin that induces reversible paralysis in crickets but not in cockroaches and mice. Molecular target unknown. This chain is U1-theraphotoxin-Cv1a, found in Coremiocnemis valida (Singapore tarantula).